The following is a 457-amino-acid chain: Adenylosuccinate synthetase (457 aa).

GTP-binding positions include 40–46 (GDEGKGK) and 70–72 (GHT). Catalysis depends on Asp-41, which acts as the Proton acceptor. Residues Asp-41 and Gly-70 each coordinate Mg(2+). Residues 41 to 44 (DEGK), 68 to 71 (NAGH), Thr-161, Arg-175, Asn-255, Thr-270, and Arg-334 contribute to the IMP site. His-71 functions as the Proton donor in the catalytic mechanism. 330-336 (VTTGRKR) serves as a coordination point for substrate. GTP-binding positions include Arg-336, 362–364 (KLD), and 444–446 (GVG).

Belongs to the adenylosuccinate synthetase family. In terms of assembly, homodimer. Requires Mg(2+) as cofactor.

The protein resides in the cytoplasm. The enzyme catalyses IMP + L-aspartate + GTP = N(6)-(1,2-dicarboxyethyl)-AMP + GDP + phosphate + 2 H(+). The protein operates within purine metabolism; AMP biosynthesis via de novo pathway; AMP from IMP: step 1/2. Functionally, plays an important role in the de novo pathway and in the salvage pathway of purine nucleotide biosynthesis. Catalyzes the first committed step in the biosynthesis of AMP from IMP. The polypeptide is Adenylosuccinate synthetase (Caenorhabditis elegans).